The chain runs to 469 residues: Dihydrolipoyl dehydrogenase (469 aa).

Residues 40–48 (EKASLGGVC), K57, and A120 each bind FAD. A disulfide bridge links C48 with C53. NAD(+) contacts are provided by residues 186–190 (GGGAI), E209, and 275–278 (AVGV). FAD contacts are provided by D317 and A325. H450 functions as the Proton acceptor in the catalytic mechanism.

The protein belongs to the class-I pyridine nucleotide-disulfide oxidoreductase family. In terms of assembly, homodimer. FAD serves as cofactor.

The protein localises to the cytoplasm. It catalyses the reaction N(6)-[(R)-dihydrolipoyl]-L-lysyl-[protein] + NAD(+) = N(6)-[(R)-lipoyl]-L-lysyl-[protein] + NADH + H(+). Its function is as follows. Lipoamide dehydrogenase is a component of the alpha-ketoacid dehydrogenase complexes. The sequence is that of Dihydrolipoyl dehydrogenase (lpd) from Chlorobaculum parvum (strain DSM 263 / NCIMB 8327) (Chlorobium vibrioforme subsp. thiosulfatophilum).